Reading from the N-terminus, the 164-residue chain is MTRKESELEGVTLLGNQGTNYLFEYAPEVLESFPNKHVNRDYFVKFNCPEFTSLCPKTGQPDFATIYISYIPDEKMVESKSLKLYLFSFRNHGDFHEDCMNIIMNDLIELMDPRYIEVWGKFTPRGGISIDPYTNYGRPGTKYEKMAEHRMMNHDMYPETIDNR.

Cys-55 functions as the Thioimide intermediate in the catalytic mechanism. Asp-62 functions as the Proton donor in the catalytic mechanism. Substrate is bound by residues 77–79 and 96–97; these read VES and HE.

It belongs to the GTP cyclohydrolase I family. QueF type 1 subfamily.

Its subcellular location is the cytoplasm. It catalyses the reaction 7-aminomethyl-7-carbaguanine + 2 NADP(+) = 7-cyano-7-deazaguanine + 2 NADPH + 3 H(+). It functions in the pathway tRNA modification; tRNA-queuosine biosynthesis. In terms of biological role, catalyzes the NADPH-dependent reduction of 7-cyano-7-deazaguanine (preQ0) to 7-aminomethyl-7-deazaguanine (preQ1). The sequence is that of NADPH-dependent 7-cyano-7-deazaguanine reductase from Bacillus velezensis (strain DSM 23117 / BGSC 10A6 / LMG 26770 / FZB42) (Bacillus amyloliquefaciens subsp. plantarum).